An 854-amino-acid chain; its full sequence is Glucans biosynthesis glucosyltransferase H (854 aa).

A run of 7 helical transmembrane segments spans residues I155–L175, I209–M229, V528–L548, I583–L603, F619–F639, F671–L691, and F695–Y715.

Belongs to the glycosyltransferase 2 family. OpgH subfamily.

It localises to the cell inner membrane. It participates in glycan metabolism; osmoregulated periplasmic glucan (OPG) biosynthesis. Its function is as follows. Involved in the biosynthesis of osmoregulated periplasmic glucans (OPGs). In Pectobacterium carotovorum subsp. carotovorum (strain PC1), this protein is Glucans biosynthesis glucosyltransferase H.